An 88-amino-acid chain; its full sequence is Molybdopterin synthase sulfur carrier subunit (88 aa).

1-thioglycine; alternate is present on glycine 88. Glycine 88 bears the Glycyl adenylate; alternate mark.

This sequence belongs to the MoaD family. MOCS2A subfamily. As to quaternary structure, heterotetramer; composed of 2 small (MOCS2A) and 2 large (MOCS2B) subunits. In terms of processing, C-terminal thiocarboxylation occurs in 2 steps, it is first acyl-adenylated (-COAMP) via the hesA/moeB/thiF part of MOCS3, then thiocarboxylated (-COSH) via the rhodanese domain of MOCS3. As to expression, widely expressed. Highest levels are found in heart and skeletal muscle. Lower levels are present in brain, kidney and pancreas. Very low levels are found in lung and peripheral blood leukocytes.

Its subcellular location is the cytoplasm. It is found in the cytosol. It participates in cofactor biosynthesis; molybdopterin biosynthesis. In terms of biological role, acts as a sulfur carrier required for molybdopterin biosynthesis. Component of the molybdopterin synthase complex that catalyzes the conversion of precursor Z into molybdopterin by mediating the incorporation of 2 sulfur atoms into precursor Z to generate a dithiolene group. In the complex, serves as sulfur donor by being thiocarboxylated (-COSH) at its C-terminus by MOCS3. After interaction with MOCS2B, the sulfur is then transferred to precursor Z to form molybdopterin. The sequence is that of Molybdopterin synthase sulfur carrier subunit from Homo sapiens (Human).